Reading from the N-terminus, the 1015-residue chain is DExH-box ATP-dependent RNA helicase DExH8 (1015 aa).

Residues 36–197 (IDKILENRVT…FKELGRGERV (162 aa)) form the Helicase ATP-binding domain. Position 49–56 (49–56 (GEPGCGKS)) interacts with ATP. The DEVH box motif lies at 144-147 (DEVH). Residues 254–419 (LIHDLILYIH…KLSLRQQVLH (166 aa)) form the Helicase C-terminal domain. 2 C3H1-type zinc fingers span residues 727-753 (YGEA…THTL) and 754-782 (QSTR…HAMR).

It belongs to the DExH box helicase family.

It carries out the reaction ATP + H2O = ADP + phosphate + H(+). This Arabidopsis thaliana (Mouse-ear cress) protein is DExH-box ATP-dependent RNA helicase DExH8.